The primary structure comprises 716 residues: Calpain clp-4 (716 aa).

The tract at residues 31-53 is disordered; that stretch reads DDDDKQEAPVAVSKAPKGKGSNH. The Calpain catalytic domain maps to 240–536; sequence LFEDPEFPAT…FTQMEVCNLT (297 aa). Residues cysteine 295, histidine 452, and asparagine 476 contribute to the active site.

It belongs to the peptidase C2 family.

Functionally, calcium-regulated non-lysosomal thiol-protease which catalyzes limited proteolysis of substrates. Promotes starvation-induced muscle atrophy. The polypeptide is Calpain clp-4 (Caenorhabditis elegans).